A 303-amino-acid polypeptide reads, in one-letter code: Agmatinase (303 aa).

Positions 126, 149, 151, 153, 230, and 232 each coordinate Mn(2+).

It belongs to the arginase family. Agmatinase subfamily. Mn(2+) is required as a cofactor.

It carries out the reaction agmatine + H2O = urea + putrescine. Catalyzes the formation of putrescine from agmatine. This is Agmatinase (speB) from Blochmanniella floridana.